The following is a 502-amino-acid chain: Glutamate--tRNA ligase (502 aa).

Positions 9–19 match the 'HIGH' region motif; that stretch reads PSPTGFPHVGT. A 'KMSKS' region motif is present at residues 250-254; sequence KLSKR. Lysine 253 provides a ligand contact to ATP.

This sequence belongs to the class-I aminoacyl-tRNA synthetase family. Glutamate--tRNA ligase type 1 subfamily. In terms of assembly, monomer.

The protein resides in the cytoplasm. It carries out the reaction tRNA(Glu) + L-glutamate + ATP = L-glutamyl-tRNA(Glu) + AMP + diphosphate. Its function is as follows. Catalyzes the attachment of glutamate to tRNA(Glu) in a two-step reaction: glutamate is first activated by ATP to form Glu-AMP and then transferred to the acceptor end of tRNA(Glu). This is Glutamate--tRNA ligase from Acinetobacter baumannii (strain AYE).